We begin with the raw amino-acid sequence, 274 residues long: Thiamine kinase (274 aa).

The protein belongs to the thiamine kinase family.

The enzyme catalyses thiamine + ATP = thiamine phosphate + ADP + H(+). It functions in the pathway cofactor biosynthesis; thiamine diphosphate biosynthesis; thiamine phosphate from thiamine: step 1/1. Its function is as follows. Catalyzes the ATP-dependent phosphorylation of thiamine to thiamine phosphate. Is involved in thiamine salvage. This Salmonella choleraesuis (strain SC-B67) protein is Thiamine kinase.